The chain runs to 436 residues: MASWIFKLLLLLQCVLVLIQHADSSSIIRYLPGFEGPLPFELETGYIGVGQKEEDQLFYYFIKSENNPEEDPLLVWLTGGPGCSSFSGLVYENGPLAFKVETYNGSVPTLVSTTYSWTKVANIIYLDQPVGTGFSYSRNPFADIPSDTGSVKRVNEFVRKWLAKHPEYFSNPFYVTGNSYSGKVIPAIVQEISNGNYICCKPQINLQGYVIGNPVAYYDHDKDFRIPFAHGVALISDELFESLKASCGGSYSVVDPLNTECLKLIEDYDKCVSGIYEELILKSKCEHTSPDCYTYRYLLSEYWADNETVRRALKVVKGSKGTWERCDYRVLSNQDIKSSIPFHINNSIRGYRSLVISGDHDMTIPFLGTQAWIRSLNYSITEKWRPWMILDQVAGYTKTYANKMTLATVKGGGHTLEYKPEENSVLFKRWISGQPL.

An N-terminal signal peptide occupies residues 1–24 (MASWIFKLLLLLQCVLVLIQHADS). Cystine bridges form between cysteine 83/cysteine 326, cysteine 247/cysteine 261, and cysteine 285/cysteine 292. An N-linked (GlcNAc...) asparagine glycan is attached at asparagine 104. Serine 179 is an active-site residue. Asparagine 306 and asparagine 345 each carry an N-linked (GlcNAc...) asparagine glycan. The active site involves aspartate 361. N-linked (GlcNAc...) asparagine glycosylation occurs at asparagine 377. Residue histidine 414 is part of the active site.

Belongs to the peptidase S10 family. In terms of tissue distribution, expressed in seedlings and roots.

It is found in the secreted. Its function is as follows. Probable carboxypeptidase. This chain is Serine carboxypeptidase-like 15 (SCPL15), found in Arabidopsis thaliana (Mouse-ear cress).